Here is a 394-residue protein sequence, read N- to C-terminus: Elongation factor Tu (394 aa).

A tr-type G domain is found at 10–204; the sequence is KPHVNVGTIG…YLDSYIPEPE (195 aa). The interval 19–26 is G1; sequence GHVDHGKT. Residue 19–26 participates in GTP binding; sequence GHVDHGKT. A Mg(2+)-binding site is contributed by Thr26. A G2 region spans residues 60 to 64; sequence GITIN. The tract at residues 81-84 is G3; the sequence is DCPG. Residues 81-85 and 136-139 each bind GTP; these read DCPGH and NKCD. The G4 stretch occupies residues 136–139; that stretch reads NKCD. Residues 174-176 are G5; the sequence is SAL.

It belongs to the TRAFAC class translation factor GTPase superfamily. Classic translation factor GTPase family. EF-Tu/EF-1A subfamily. In terms of assembly, monomer.

Its subcellular location is the cytoplasm. The enzyme catalyses GTP + H2O = GDP + phosphate + H(+). In terms of biological role, GTP hydrolase that promotes the GTP-dependent binding of aminoacyl-tRNA to the A-site of ribosomes during protein biosynthesis. In Pectobacterium atrosepticum (strain SCRI 1043 / ATCC BAA-672) (Erwinia carotovora subsp. atroseptica), this protein is Elongation factor Tu.